The primary structure comprises 316 residues: Thymidylate synthase (316 aa).

DUMP contacts are provided by residues Arg23 and 178–179 (RR). Cys198 serves as the catalytic Nucleophile. DUMP-binding positions include 218 to 221 (RSAD), Asn229, and 259 to 261 (HLY). Asp221 is a (6R)-5,10-methylene-5,6,7,8-tetrahydrofolate binding site. (6R)-5,10-methylene-5,6,7,8-tetrahydrofolate is bound at residue Ala315.

Belongs to the thymidylate synthase family. Bacterial-type ThyA subfamily. In terms of assembly, homodimer.

It localises to the cytoplasm. It catalyses the reaction dUMP + (6R)-5,10-methylene-5,6,7,8-tetrahydrofolate = 7,8-dihydrofolate + dTMP. It functions in the pathway pyrimidine metabolism; dTTP biosynthesis. Its function is as follows. Catalyzes the reductive methylation of 2'-deoxyuridine-5'-monophosphate (dUMP) to 2'-deoxythymidine-5'-monophosphate (dTMP) while utilizing 5,10-methylenetetrahydrofolate (mTHF) as the methyl donor and reductant in the reaction, yielding dihydrofolate (DHF) as a by-product. This enzymatic reaction provides an intracellular de novo source of dTMP, an essential precursor for DNA biosynthesis. This chain is Thymidylate synthase, found in Lacticaseibacillus casei (Lactobacillus casei).